The sequence spans 374 residues: Amino acid binding protein (374 aa).

Positions 1–27 (MSKKLFRKGILALAVSSVMGLSTHALA) are cleaved as a signal peptide.

This sequence belongs to the leucine-binding protein family.

Its subcellular location is the periplasm. In terms of biological role, binds primarily proteinogenic amino acids. In Pseudomonas aeruginosa (strain ATCC 15692 / DSM 22644 / CIP 104116 / JCM 14847 / LMG 12228 / 1C / PRS 101 / PAO1), this protein is Amino acid binding protein.